We begin with the raw amino-acid sequence, 986 residues long: MPGVARLPLLLGLLLLPRPGRPLDLADYTYDLAEEDDSEPLNYKDPCKAAAFLGDIALDEEDLRAFQVQQAVDLRRHTARKSSIKAAVPGNTSTPSCQSTNGQPQRGACGRWRGRSRSRRAATSRPERVWPDGVIPFVIGGNFTGSQRAVFRQAMRHWEKHTCVTFLERTDEDSYIVFTYRPCGCCSYVGRRGGGPQAISIGKNCDKFGIVVHELGHVVGFWHEHTRPDRDRHVSIVRENIQPGQEYNFLKMEPQEVESLGETYDFDSIMHYARNTFSRGIFLDTIVPKYEVNGVKPPIGQRTRLSKGDIAQARKLYKCPACGETLQDSTGNFSSPEYPNGYSAHMHCVWRISVTPGEKIILNFTSLDLYRSRLCWYDYVEVRDGFWRKAPLRGRFCGSKLPEPIVSTDSRLWVEFRSSSNWVGKGFFAVYEAICGGDVKKDYGHIQSPNYPDDYRPSKVCIWRIQVSEGFHVGLTFQSFEIERHDSCAYDYLEVRDGHSESSTLIGRYCGYEKPDDIKSTSSRLWLKFVSDGSINKAGFAVNFFKEVDECSRPNRGGCEQRCLNTLGSYKCSCDPGYELAPDKRRCEAACGGFLTKLNGSITSPGWPKEYPPNKNCIWQLVAPTQYRISLQFDFFETEGNDVCKYDFVEVRSGLTADSKLHGKFCGSEKPEVITSQYNNMRVEFKSDNTVSKKGFKAHFFSDKDECSKDNGGCQQDCVNTFGSYECQCRSGFVLHDNKHDCKEAGCDHKVTSTSGTITSPNWPDKYPSKKECTWAISSTPGHRVKLTFMEMDIESQPECAYDHLEVFDGRDAKAPVLGRFCGSKKPEPVLATGSRMFLRFYSDNSVQRKGFQASHATECGGQVRADVKTKDLYSHAQFGDNNYPGGVDCEWVIVAEEGYGVELVFQTFEVEEETDCGYDYMELFDGYDSTAPRLGRYCGSGPPEEVYSAGDSVLVKFHSDDTITKKGFHLRYTSTKFQDTLHSRK.

Residues M1–P22 form the signal peptide. Positions L23–R120 are excised as a propeptide. A disordered region spans residues S83–R125. The segment covering G90–P104 has biased composition (polar residues). N91 carries an N-linked (GlcNAc...) asparagine glycan. Residues W112 to A122 are compositionally biased toward basic residues. Positions A121–P320 constitute a Peptidase M12A domain. N-linked (GlcNAc...) asparagine glycosylation is present at N142. Disulfide bonds link C163–C319, C183–C205, C185–C186, and C322–C348. H213 contacts Zn(2+). Residue E214 is part of the active site. Residues H217 and H223 each coordinate Zn(2+). CUB domains follow at residues C322–I434 and C435–K546. Residues N332 and N363 are each glycosylated (N-linked (GlcNAc...) asparagine). 15 cysteine pairs are disulfide-bonded: C375–C397, C435–C461, C488–C510, C551–C563, C559–C572, C574–C587, C591–C617, C644–C666, C707–C718, C714–C727, C729–C742, C747–C773, C800–C822, C860–C890, and C917–C939. The region spanning E547–E588 is the EGF-like 1; calcium-binding domain. The region spanning C591–D703 is the CUB 3 domain. Residue N599 is glycosylated (N-linked (GlcNAc...) asparagine). The EGF-like 2; calcium-binding domain occupies K704–K743. CUB domains are found at residues C747 to E859 and C860 to T976. Omega-N-methylarginine is present on residues R934 and R937.

In terms of assembly, interacts with POSTN, the interaction promotes deposition on the extracellular matrix. It depends on Zn(2+) as a cofactor. Post-translationally, proteolytically activated in the trans-Golgi network by furin-like/paired basic proprotein convertases, cleavage is not required for secretion. In terms of tissue distribution, ubiquitous.

The protein resides in the golgi apparatus. It is found in the trans-Golgi network. It localises to the secreted. Its subcellular location is the extracellular space. The protein localises to the extracellular matrix. The enzyme catalyses Cleavage of the C-terminal propeptide at Ala-|-Asp in type I and II procollagens and at Arg-|-Asp in type III.. With respect to regulation, activity is increased by the procollagen C-endopeptidase enhancer protein. Functionally, metalloprotease that plays key roles in regulating the formation of the extracellular matrix (ECM) via processing of various precursor proteins into mature functional enzymes or structural proteins. Thereby participates in several developmental and physiological processes such as cartilage and bone formation, muscle growth and homeostasis, wound healing and tissue repair. Roles in ECM formation include cleavage of the C-terminal propeptides from procollagens such as procollagen I, II and III or the proteolytic activation of the enzyme lysyl oxidase LOX, necessary to formation of covalent cross-links in collagen and elastic fibers. Additional substrates include matricellular thrombospondin-1/THBS1 whose cleavage leads to cell adhesion disruption and TGF-beta activation. In terms of biological role, plays an important role in bone repair by acting as a coactivator of BMP7. The polypeptide is Bone morphogenetic protein 1 (BMP1) (Homo sapiens (Human)).